Reading from the N-terminus, the 327-residue chain is DNA-directed RNA polymerase subunit alpha (327 aa).

Positions 1 to 233 (MVREKVKVST…NLFIPFLHVE (233 aa)) are alpha N-terminal domain (alpha-NTD). An alpha C-terminal domain (alpha-CTD) region spans residues 267–327 (LAFQYIFIDQ…KKILDILEKK (61 aa)).

It belongs to the RNA polymerase alpha chain family. In plastids the minimal PEP RNA polymerase catalytic core is composed of four subunits: alpha, beta, beta', and beta''. When a (nuclear-encoded) sigma factor is associated with the core the holoenzyme is formed, which can initiate transcription.

The protein localises to the plastid. It localises to the chloroplast. The enzyme catalyses RNA(n) + a ribonucleoside 5'-triphosphate = RNA(n+1) + diphosphate. In terms of biological role, DNA-dependent RNA polymerase catalyzes the transcription of DNA into RNA using the four ribonucleoside triphosphates as substrates. In Lobularia maritima (Sweet alyssum), this protein is DNA-directed RNA polymerase subunit alpha.